The primary structure comprises 423 residues: Zinc-type alcohol dehydrogenase-like protein C1198.01 (423 aa).

A disordered region spans residues 14 to 36 (KQLGHREVSEGSTQPKPDPSGAT). Residues Cys-74, His-97, Cys-127, Cys-130, Cys-133, and Cys-141 each coordinate Zn(2+).

The protein belongs to the zinc-containing alcohol dehydrogenase family. Class-III subfamily. Requires Zn(2+) as cofactor.

It is found in the golgi apparatus. This Schizosaccharomyces pombe (strain 972 / ATCC 24843) (Fission yeast) protein is Zinc-type alcohol dehydrogenase-like protein C1198.01.